The sequence spans 371 residues: Gustatory receptor-like 65a (371 aa).

Over 1-13 (MREVNLLNRFTRQ) the chain is Cytoplasmic. A helical membrane pass occupies residues 14 to 34 (FLFLIVLVTQICGVATFVYNS). The Extracellular segment spans residues 35 to 42 (KAQCFRQS). Residues 43-63 (GFLRFYSSLVLIFLALFLIVT) form a helical membrane-spanning segment. Topologically, residues 64–72 (TSKMFHNLQ) are cytoplasmic. Residues 73-93 (AVWPYVVGSVIILVVRIHGLL) traverse the membrane as a helical segment. Over 94–126 (ESAEIVELLNQMLRIMRQVNLMARHPNLFRLKH) the chain is Extracellular. The chain crosses the membrane as a helical span at residues 127 to 147 (LLLLLLALQNLLRSLNTIVGI). Topologically, residues 148–161 (SNHSAEAYDSFLNS) are cytoplasmic. A helical transmembrane segment spans residues 162 to 182 (VILLIILAVLLSFLLQITINI). Residues 183 to 251 (CLFVVLIATY…FHITVRIIRH (69 aa)) are Extracellular-facing. Residues 252-272 (FRFHWLCAIIYGLLPFFSLTA) traverse the membrane as a helical segment. The Cytoplasmic segment spans residues 273 to 277 (KDQNG). The chain crosses the membrane as a helical span at residues 278-298 (FNFLIISALNIIFQWTIFAIL). Topologically, residues 299–371 (SRESRITRSL…FVNRLEYLHI (73 aa)) are extracellular.

Its subcellular location is the cell membrane. The protein is Gustatory receptor-like 65a of Drosophila melanogaster (Fruit fly).